Here is a 272-residue protein sequence, read N- to C-terminus: Bis(5'-nucleosyl)-tetraphosphatase, symmetrical (272 aa).

The protein belongs to the Ap4A hydrolase family.

It catalyses the reaction P(1),P(4)-bis(5'-adenosyl) tetraphosphate + H2O = 2 ADP + 2 H(+). Functionally, hydrolyzes diadenosine 5',5'''-P1,P4-tetraphosphate to yield ADP. In Chromohalobacter salexigens (strain ATCC BAA-138 / DSM 3043 / CIP 106854 / NCIMB 13768 / 1H11), this protein is Bis(5'-nucleosyl)-tetraphosphatase, symmetrical.